The following is a 208-amino-acid chain: Guanylate kinase (208 aa).

Residues 4-185 form the Guanylate kinase-like domain; the sequence is GNLYILSAPS…TLKDLQSILQ (182 aa). Position 11 to 18 (11 to 18) interacts with ATP; sequence APSGAGKS.

Belongs to the guanylate kinase family.

The protein localises to the cytoplasm. It carries out the reaction GMP + ATP = GDP + ADP. In terms of biological role, essential for recycling GMP and indirectly, cGMP. In Haemophilus influenzae (strain 86-028NP), this protein is Guanylate kinase.